The primary structure comprises 156 residues: Small ribosomal subunit protein uS7 (156 aa).

The protein belongs to the universal ribosomal protein uS7 family. Part of the 30S ribosomal subunit. Contacts proteins S9 and S11.

Its function is as follows. One of the primary rRNA binding proteins, it binds directly to 16S rRNA where it nucleates assembly of the head domain of the 30S subunit. Is located at the subunit interface close to the decoding center, probably blocks exit of the E-site tRNA. This is Small ribosomal subunit protein uS7 from Shewanella sp. (strain ANA-3).